Consider the following 271-residue polypeptide: Aspartate/glutamate leucyltransferase (271 aa).

The protein belongs to the R-transferase family. Bpt subfamily.

It localises to the cytoplasm. It catalyses the reaction N-terminal L-glutamyl-[protein] + L-leucyl-tRNA(Leu) = N-terminal L-leucyl-L-glutamyl-[protein] + tRNA(Leu) + H(+). The catalysed reaction is N-terminal L-aspartyl-[protein] + L-leucyl-tRNA(Leu) = N-terminal L-leucyl-L-aspartyl-[protein] + tRNA(Leu) + H(+). Its function is as follows. Functions in the N-end rule pathway of protein degradation where it conjugates Leu from its aminoacyl-tRNA to the N-termini of proteins containing an N-terminal aspartate or glutamate. The chain is Aspartate/glutamate leucyltransferase from Acinetobacter baylyi (strain ATCC 33305 / BD413 / ADP1).